The chain runs to 233 residues: Protein lin-7 homolog A (233 aa).

A Kinase interacting site motif is present at residues 14–28; that stretch reads MATLTVVQPLTLDRD. Residues 25–80 enclose the L27 domain; the sequence is LDRDVARAIELLEKLQESGEVPVHKLQSLKKVLQSEFCTAIREVYQYMHETITVNG. One can recognise a PDZ domain in the interval 108–190; it reads VVELPKTDEG…SVKLVVRYTP (83 aa). The disordered stretch occupies residues 214 to 233; the sequence is LLIQQQQQQQQQQPQQNHMS.

Belongs to the lin-7 family. Forms a complex with CASK and CASKIN1. Component of the brain-specific heterotrimeric complex (LIN-10-LIN-2-LIN-7 complex) composed of at least APBA1, CASK, and LIN7, which associates with the motor protein KIF17 to transport vesicles along microtubules. Can also interact with other modular proteins containing protein-protein interaction domains like PALS1, PALS2, MPP7, DLG1, DLG2 and DLG3 through its L27 domain. Interacts with DLG4, GRIN2B and MARCHF11 as well as CDH1 and CTNNB1, the channels KCNJ12/Kir2.2, KCNJ4/Kir2.3 and probably KCNJ2/Kir2.1 and SLC6A12/BGT-1 via its PDZ domain. The association of LIN7A with cadherin and beta-catenin is calcium-dependent, occurs at synaptic junctions and requires the actin cytoskeleton. Interacts with EGFR, ERBB2, ERBB3 and ERBB4 with both PDZ and KID domains. Associates with KIF17 via APBA1. Interacts with HTR4. Forms a tripartite complex composed of DLG1, MPP7 and LIN7 (LIN7A or LIN7C). In terms of tissue distribution, expressed in the kidney, along the length of the nephron.

The protein resides in the cell membrane. It is found in the basolateral cell membrane. It localises to the cell junction. Its subcellular location is the postsynaptic density membrane. The protein localises to the tight junction. Its function is as follows. Plays a role in establishing and maintaining the asymmetric distribution of channels and receptors at the plasma membrane of polarized cells. Forms membrane-associated multiprotein complexes that may regulate delivery and recycling of proteins to the correct membrane domains. The tripartite complex composed of LIN7 (LIN7A, LIN7B or LIN7C), CASK and APBA1 associates with the motor protein KIF17 to transport vesicles containing N-methyl-D-aspartate (NMDA) receptor subunit NR2B along microtubules. This complex may have the potential to couple synaptic vesicle exocytosis to cell adhesion in brain. Ensures the proper localization of GRIN2B (subunit 2B of the NMDA receptor) to neuronal postsynaptic density and may function in localizing synaptic vesicles at synapses where it is recruited by beta-catenin and cadherin. Required to localize Kir2 channels, GABA transporter (SLC6A12) and EGFR/ERBB1, ERBB2, ERBB3 and ERBB4 to the basolateral membrane of epithelial cells. The polypeptide is Protein lin-7 homolog A (Lin7a) (Mus musculus (Mouse)).